A 248-amino-acid chain; its full sequence is Ubiquinone/menaquinone biosynthesis C-methyltransferase UbiE (248 aa).

S-adenosyl-L-methionine contacts are provided by S68 and D92.

This sequence belongs to the class I-like SAM-binding methyltransferase superfamily. MenG/UbiE family.

The catalysed reaction is a 2-demethylmenaquinol + S-adenosyl-L-methionine = a menaquinol + S-adenosyl-L-homocysteine + H(+). It carries out the reaction a 2-methoxy-6-(all-trans-polyprenyl)benzene-1,4-diol + S-adenosyl-L-methionine = a 5-methoxy-2-methyl-3-(all-trans-polyprenyl)benzene-1,4-diol + S-adenosyl-L-homocysteine + H(+). It functions in the pathway quinol/quinone metabolism; menaquinone biosynthesis; menaquinol from 1,4-dihydroxy-2-naphthoate: step 2/2. Its pathway is cofactor biosynthesis; ubiquinone biosynthesis. Methyltransferase required for the conversion of demethylmenaquinol (DMKH2) to menaquinol (MKH2) and the conversion of 2-polyprenyl-6-methoxy-1,4-benzoquinol (DDMQH2) to 2-polyprenyl-3-methyl-6-methoxy-1,4-benzoquinol (DMQH2). The sequence is that of Ubiquinone/menaquinone biosynthesis C-methyltransferase UbiE from Rickettsia felis (strain ATCC VR-1525 / URRWXCal2) (Rickettsia azadi).